A 494-amino-acid polypeptide reads, in one-letter code: Guanosine-5'-triphosphate,3'-diphosphate pyrophosphatase (494 aa).

The protein belongs to the GppA/Ppx family. GppA subfamily.

It carries out the reaction guanosine 3'-diphosphate 5'-triphosphate + H2O = guanosine 3',5'-bis(diphosphate) + phosphate + H(+). The protein operates within purine metabolism; ppGpp biosynthesis; ppGpp from GTP: step 2/2. Its function is as follows. Catalyzes the conversion of pppGpp to ppGpp. Guanosine pentaphosphate (pppGpp) is a cytoplasmic signaling molecule which together with ppGpp controls the 'stringent response', an adaptive process that allows bacteria to respond to amino acid starvation, resulting in the coordinated regulation of numerous cellular activities. In Escherichia fergusonii (strain ATCC 35469 / DSM 13698 / CCUG 18766 / IAM 14443 / JCM 21226 / LMG 7866 / NBRC 102419 / NCTC 12128 / CDC 0568-73), this protein is Guanosine-5'-triphosphate,3'-diphosphate pyrophosphatase.